Here is a 717-residue protein sequence, read N- to C-terminus: Delta-like protein D (717 aa).

A signal peptide spans 1–19; that stretch reads MGRLMIAVLLCVMISQGFC. Over 20–547 the chain is Extracellular; sequence SGVFELKLQE…EEDDGGFPWT (528 aa). Residues 175 to 219 enclose the DSL domain; sequence FVCDEHYYGEGCSVFCRPRDDTFGHFTCGERGEIICNSGWKGQYC. Disulfide bonds link Cys177–Cys186, Cys190–Cys202, Cys210–Cys219, Cys224–Cys235, Cys228–Cys241, Cys243–Cys252, Cys261–Cys266, Cys274–Cys283, Cys290–Cys302, Cys296–Cys312, Cys314–Cys323, Cys330–Cys341, Cys335–Cys350, Cys352–Cys361, Cys368–Cys379, Cys373–Cys389, Cys391–Cys400, Cys407–Cys418, Cys412–Cys427, Cys429–Cys438, Cys445–Cys456, Cys450–Cys465, Cys467–Cys476, Cys483–Cys494, Cys488–Cys503, and Cys505–Cys514. EGF-like domains are found at residues 220-253, 257-284, and 286-324; these read TEPI…KYCD, RYPG…LFCN, and DLNY…DSCE. Residues 326–362 form the EGF-like 4; calcium-binding domain; it reads EVNECSGSPCRNGGSCTDLENTYSCTCPPGFYGRNCE. 2 EGF-like domains span residues 364 to 401 and 403 to 439; these read SAMT…FNCE and KIDH…THCE. In terms of domain architecture, EGF-like 7; calcium-binding spans 441–477; that stretch reads NIDECATYPCQNGGTCQDGLSDYTCTCPPGYTGKNCT. Residue Asn475 is glycosylated (N-linked (GlcNAc...) asparagine). An EGF-like 8 domain is found at 479–515; that stretch reads AVNKCLHNPCHNGATCHEMDNRYVCACIPGYGGRNCQ. A helical transmembrane segment spans residues 548–568; the sequence is AVCAGIILVLLVLIGGSVFVI. Residues 569–717 lie on the Cytoplasmic side of the membrane; sequence YIRLKLQQRS…KDECIIATEV (149 aa). The tract at residues 649 to 693 is disordered; it reads EDLGKEDSERSEATKCEPLDSDSEEKHRNHLKSDSSERKRTESLC.

Interacts with mib. In terms of processing, ubiquitinated by mib, leading to its endocytosis and subsequent degradation. As to expression, expressed in both mesodermal and neuroectodermal regions. In the developing nervous system, it is expressed in overlapping regions with deltaB (dlb) and deltaA (dla); in the neural plate, dld is expressed in patches of contiguous cells with dla, while dlb is confined to scattered cells within those patches that will differentiate as neurons. In somites, it marks the anterior part of each formed somite, while deltaC (dlc) marks the posterior part. In 24 hours embryos, expressed in the hindbrain in stripes adjacent to rhombomere boundaries, but not in the actual boundary cells.

It is found in the membrane. In terms of biological role, acts as a ligand for Notch receptors and is involved in primary neurogenesis and somitogenesis. Can activate Notch receptors, thereby playing a key role in lateral inhibition, a process that prevents the immediate neighbors of each nascent neural cell from simultaneously embarking on neural differentiation. Required in somite segmentation to keep the oscillations of neighboring presomitic mesoderm cells synchronized. The polypeptide is Delta-like protein D (dld) (Danio rerio (Zebrafish)).